Consider the following 549-residue polypeptide: Cytoplasmic trehalase (549 aa).

Substrate contacts are provided by residues Arg-168, 175–176 (WD), Asn-212, 221–223 (RSQ), 292–294 (RDE), and Gly-324. Active-site proton donor/acceptor residues include Asp-326 and Glu-509. Position 525 (Glu-525) interacts with substrate.

Belongs to the glycosyl hydrolase 37 family. In terms of assembly, monomer.

Its subcellular location is the cytoplasm. The enzyme catalyses alpha,alpha-trehalose + H2O = alpha-D-glucose + beta-D-glucose. The protein operates within glycan degradation; trehalose degradation; D-glucose from alpha,alpha-trehalose: step 1/1. In terms of biological role, hydrolyzes trehalose to glucose. Could be involved, in cells returning to low osmolarity conditions, in the utilization of the accumulated cytoplasmic trehalose, which was synthesized in response to high osmolarity. This Salmonella arizonae (strain ATCC BAA-731 / CDC346-86 / RSK2980) protein is Cytoplasmic trehalase.